Consider the following 193-residue polypeptide: Protein SINE3 (193 aa).

The segment at 15–35 (SELGAKRLKDPEMKNRKVTTE) is disordered. Over residues 18–35 (GAKRLKDPEMKNRKVTTE) the composition is skewed to basic and acidic residues. Residues 155 to 193 (VTVKFRIVLLSFILWAILAAIVVFFSSGEERAYRGPLPT) form the KASH domain. The chain crosses the membrane as a helical span at residues 161–181 (IVLLSFILWAILAAIVVFFSS). A Required for nuclear localization motif is present at residues 190-193 (PLPT).

As to quaternary structure, interacts with SUN1 and SUN2.

The protein resides in the nucleus membrane. The polypeptide is Protein SINE3 (Arabidopsis thaliana (Mouse-ear cress)).